The primary structure comprises 452 residues: Phosphoglucosamine mutase (452 aa).

The active-site Phosphoserine intermediate is the Ser98. Mg(2+)-binding residues include Ser98, Asp239, Asp241, and Asp243. Ser98 is modified (phosphoserine).

The protein belongs to the phosphohexose mutase family. The cofactor is Mg(2+). Post-translationally, activated by phosphorylation.

The catalysed reaction is alpha-D-glucosamine 1-phosphate = D-glucosamine 6-phosphate. Catalyzes the conversion of glucosamine-6-phosphate to glucosamine-1-phosphate. The polypeptide is Phosphoglucosamine mutase (Anaplasma marginale (strain St. Maries)).